We begin with the raw amino-acid sequence, 262 residues long: Acyl-coenzyme A diphosphatase FITM2 (262 aa).

Over 1–23 (MEHLERCAWVLRGTLVRAAVRRY) the chain is Cytoplasmic. A helical transmembrane segment spans residues 24 to 44 (LPWALAASMLAGSLLKELSPL). Over 45–57 (PESYLSNKRNVLN) the chain is Lumenal. The helical transmembrane segment at 58–78 (VYFVKVAWAWTFCLLLPFIAL) threads the bilayer. At 79 to 93 (TNYHLTGKAGLVLRR) the chain is on the cytoplasmic side. Residues 94–114 (LSTLLVGTAIWYVCTAIFSNV) traverse the membrane as a helical segment. Residues 115–145 (EHYTGSCYQSPALEGVRNEPLSKQQCHGQGG) are Lumenal-facing. The chain crosses the membrane as a helical span at residues 146–166 (FWHGFDISGHSFLLTFCALMI). The active site involves histidine 155. Topologically, residues 167-185 (VEEMAVLHEVKTDRSHCLH) are cytoplasmic. A helical transmembrane segment spans residues 186 to 206 (VAITALVVALGFLTFIWVWMF). At 207–218 (LCTAVYFHNLSQ) the chain is on the lumenal side. The active site involves histidine 214. The helical transmembrane segment at 219–239 (KVFGTLFGLLGWYGTYGFWYL) threads the bilayer. Residues 240 to 262 (KSFSPGLPPQSCSSNLKQDSYKR) are Cytoplasmic-facing.

This sequence belongs to the FIT family. FIT2 subfamily.

It is found in the endoplasmic reticulum membrane. The enzyme catalyses an acyl-CoA + H2O = an acyl-4'-phosphopantetheine + adenosine 3',5'-bisphosphate + 2 H(+). It carries out the reaction (9Z)-octadecenoyl-CoA + H2O = S-(9Z-octadecenoyl)-4'-phosphopantetheine + adenosine 3',5'-bisphosphate + 2 H(+). The catalysed reaction is (5Z,8Z,11Z,14Z)-eicosatetraenoyl-CoA + H2O = S-(5Z,8Z,11Z,14Z-eicosatetraenoyl)-4'-phosphopantetheine + adenosine 3',5'-bisphosphate + 2 H(+). It catalyses the reaction hexadecanoyl-CoA + H2O = S-hexadecanoyl-4'-phosphopantetheine + adenosine 3',5'-bisphosphate + 2 H(+). Fatty acyl-coenzyme A (CoA) diphosphatase that hydrolyzes fatty acyl-CoA to yield acyl-4'-phosphopantetheine and adenosine 3',5'-bisphosphate. Preferentially hydrolyzes unsaturated long-chain acyl-CoA substrates such as oleoyl-CoA/(9Z)-octadecenoyl-CoA and arachidonoyl-CoA/(5Z,8Z,11Z,14Z)-eicosatetraenoyl-CoA in the endoplasmic reticulum (ER) lumen. This catalytic activity is required for maintaining ER structure and for lipid droplets (LDs) biogenesis, which are lipid storage organelles involved in maintaining lipid and energy homeostasis. Directly binds to diacylglycerol (DAGs) and triacylglycerol, which is also important for LD biogenesis. May support directional budding of nacent LDs from the ER into the cytosol by reducing DAG levels at sites of LD formation. Plays a role in the regulation of cell morphology and cytoskeletal organization. The polypeptide is Acyl-coenzyme A diphosphatase FITM2 (Sus scrofa (Pig)).